A 241-amino-acid polypeptide reads, in one-letter code: MAIDLVGQKIGMTRLISDDGSIMPVSVIKIEPNRIVQTRTIDIDGYRAIQVTTGKKVNKKGEAKVRRISAAIKGHYAKASQEIGLGLWEFKLEDNEITNATSIDISLFGAGHYVDVIGKSKGKGFQGGVKLHNFQMQDATHGNSISHRAIGSTGQCQEPGRVFKGKKMAGHMGNKQVTQECLKVVKVDIEKSVILVKGSIPGAIKGFVKVSLSPKKDNSNKEVSKNIKNQVTNEVDQTKQM.

The residue at position 157 (Q157) is an N5-methylglutamine.

This sequence belongs to the universal ribosomal protein uL3 family. Part of the 50S ribosomal subunit. Forms a cluster with proteins L14 and L19. Methylated by PrmB.

Functionally, one of the primary rRNA binding proteins, it binds directly near the 3'-end of the 23S rRNA, where it nucleates assembly of the 50S subunit. The sequence is that of Large ribosomal subunit protein uL3 from Vesicomyosocius okutanii subsp. Calyptogena okutanii (strain HA).